A 506-amino-acid chain; its full sequence is MDNNKIIVFDTTLRDGEQSPGASMNTEEKIQIALQLERLGVDVMEAGFAAASPGDFDAINQIAKQIHSIRIASLARALEKDIKAAGEAISPAKNRRIHTFIATSPIHMEHKLKMTPDEVIKRAVEAVKYAKTFVDDVEFSCEDAGRSDIVFLKEICAAVVEAGARTLNLPDTVGFRMPDEIYNMVKSMVDFIGDRAIISVHNHNDLGLAVANTLASIKAGARQVECTINGLGERAGNAALEEIVMTIRTRSDEFAPLYTDIVTKEIYATSRLVASITGIEPQPNKAIVGKNAFAHESGIHQDGMLKCAQTYEIIKAEDIGAEKNSLVLGKHSGRHAFKDKLINLGFDLDDNEINEAFIKFKELCDKKKEIFDDDIRALVSHEIIKIPEIYSIQTLSTSSCNAGHSSAAVSIKFSDNIISDAALGNGTADAIFKVIDRISGISGELKDYKVNAVSQGKDALAKITVKVVFEGSSCATIGHGLDIDTMMASAKAYVSALNSYLSMKNR.

A Pyruvate carboxyltransferase domain is found at 6 to 267 (IIVFDTTLRD…YTDIVTKEIY (262 aa)). Residues aspartate 15, histidine 201, histidine 203, and asparagine 237 each coordinate Mn(2+). The segment at 391–506 (SIQTLSTSSC…LNSYLSMKNR (116 aa)) is regulatory domain.

The protein belongs to the alpha-IPM synthase/homocitrate synthase family. LeuA type 1 subfamily. As to quaternary structure, homodimer. Mn(2+) is required as a cofactor.

The protein localises to the cytoplasm. The catalysed reaction is 3-methyl-2-oxobutanoate + acetyl-CoA + H2O = (2S)-2-isopropylmalate + CoA + H(+). It participates in amino-acid biosynthesis; L-leucine biosynthesis; L-leucine from 3-methyl-2-oxobutanoate: step 1/4. In terms of biological role, catalyzes the condensation of the acetyl group of acetyl-CoA with 3-methyl-2-oxobutanoate (2-ketoisovalerate) to form 3-carboxy-3-hydroxy-4-methylpentanoate (2-isopropylmalate). The chain is 2-isopropylmalate synthase from Campylobacter fetus subsp. fetus (strain 82-40).